The following is a 362-amino-acid chain: D-alanine--D-alanine ligase (362 aa).

The ATP-grasp domain maps to 141-346; that stretch reads KNIFAEAGLN…YPELIEELIR (206 aa). 174-229 provides a ligand contact to ATP; that stretch reads EEALGYPCFVKPANLGSSVGINKCKDREELEKAFEEAFQFDRKIIVEENIIGREVE. D300, E313, and N315 together coordinate Mg(2+).

Belongs to the D-alanine--D-alanine ligase family. It depends on Mg(2+) as a cofactor. Requires Mn(2+) as cofactor.

The protein localises to the cytoplasm. It catalyses the reaction 2 D-alanine + ATP = D-alanyl-D-alanine + ADP + phosphate + H(+). It participates in cell wall biogenesis; peptidoglycan biosynthesis. Functionally, cell wall formation. The polypeptide is D-alanine--D-alanine ligase (Bacillus cytotoxicus (strain DSM 22905 / CIP 110041 / 391-98 / NVH 391-98)).